The primary structure comprises 32 residues: Tail virion protein G9P (32 aa).

The chain crosses the membrane as a helical span at residues 4-24 (LSYFFAAYCIGWVISHSILVF).

The protein belongs to the inovirus G9P protein family.

It is found in the virion. The protein localises to the host membrane. Functionally, may initiate with G7P the virion concomitant assembly-budding process, by interacting with the packaging signal of the viral genome. The assembly-budding takes place at the host inner membrane. In turn, G7P and G9P are present at the end of the filamentous virion that emerges first from the bacterial host. In Escherichia phage If1 (Bacteriophage If1), this protein is Tail virion protein G9P (IX).